Consider the following 188-residue polypeptide: Vascular endothelial growth factor A-A (188 aa).

A signal peptide spans 1–23; that stretch reads MNLVVYLIQLFLAALLHLSAVKA. 3 cysteine pairs are disulfide-bonded: C49-C91, C80-C125, and C84-C127. N98 carries N-linked (GlcNAc...) asparagine glycosylation.

Belongs to the PDGF/VEGF growth factor family. In terms of assembly, homodimer; disulfide-linked. Isoform VEGF165 binds kdr and kdrl. As to expression, predominantly expressed in regions associated with active vascularization. From 15-16 hours post-fertilization (hpf), expressed in the anterior forebrain, the mesoderm underlying and lateral to the anterior hindbrain, the mesoderm underlying and lateral to the posterior hindbrain, and in the ventral medial portions of the somites. By 30-36 hpf, expression in the somites is decreased, while strong expression is observed in the region of the developing glomeruli and in the anterior portion of the pronephric ducts, the pharyngeal arches, and the brain. By 72 hpf, expression remains only in the pronephros region.

The protein resides in the secreted. Its function is as follows. Growth factor active in angiogenesis, vasculogenesis and endothelial cell growth. Induces endothelial cell proliferation, promotes cell migration, inhibits apoptosis, and induces permeabilization of blood vessels. Required for intersegmental vessel development in the tail during embryogenesis. Acts both upstream of kdr and tie1 to stimulate endothelial cell differentiation, and upstream of gata1 to stimulate hematopoietic cell differentiation. In Danio rerio (Zebrafish), this protein is Vascular endothelial growth factor A-A (vegfaa).